A 513-amino-acid chain; its full sequence is Putative thymidine phosphorylase 2 (513 aa).

This sequence belongs to the thymidine/pyrimidine-nucleoside phosphorylase family. Type 2 subfamily.

It catalyses the reaction thymidine + phosphate = 2-deoxy-alpha-D-ribose 1-phosphate + thymine. This is Putative thymidine phosphorylase 2 from Acidovorax sp. (strain JS42).